The sequence spans 288 residues: Transmembrane and coiled-coil domain-containing protein 5A (288 aa).

A coiled-coil region spans residues 10–192 (KRNIISLNMD…ALFLEREVSK (183 aa)). Residues 224 to 244 (IFCCLFFITLFFIRLLSYMFF) traverse the membrane as a helical segment.

It belongs to the TMCO5 family.

Its subcellular location is the endoplasmic reticulum membrane. It localises to the nucleus membrane. The protein is Transmembrane and coiled-coil domain-containing protein 5A (TMCO5A) of Homo sapiens (Human).